The sequence spans 147 residues: Cyanate hydratase (147 aa).

Residues arginine 88, glutamate 91, and serine 114 contribute to the active site.

It belongs to the cyanase family.

The enzyme catalyses cyanate + hydrogencarbonate + 3 H(+) = NH4(+) + 2 CO2. In terms of biological role, catalyzes the reaction of cyanate with bicarbonate to produce ammonia and carbon dioxide. The sequence is that of Cyanate hydratase from Thiobacillus denitrificans (strain ATCC 25259 / T1).